The primary structure comprises 278 residues: Large ribosomal subunit protein uL2 (278 aa).

Positions 222 to 278 (GVVMNPVDHPHGGGEGRTSGGRHPVTPWGKPTKGAKTRKNKSTDKFIIRSRHERKKR) are disordered. Residues 269–278 (IRSRHERKKR) are compositionally biased toward basic residues.

This sequence belongs to the universal ribosomal protein uL2 family. As to quaternary structure, part of the 50S ribosomal subunit. Forms a bridge to the 30S subunit in the 70S ribosome.

Its function is as follows. One of the primary rRNA binding proteins. Required for association of the 30S and 50S subunits to form the 70S ribosome, for tRNA binding and peptide bond formation. It has been suggested to have peptidyltransferase activity; this is somewhat controversial. Makes several contacts with the 16S rRNA in the 70S ribosome. This Maricaulis maris (strain MCS10) (Caulobacter maris) protein is Large ribosomal subunit protein uL2.